The following is a 161-amino-acid chain: uncharacterized protein (161 aa).

This is an uncharacterized protein from Methanocaldococcus jannaschii (strain ATCC 43067 / DSM 2661 / JAL-1 / JCM 10045 / NBRC 100440) (Methanococcus jannaschii).